The sequence spans 292 residues: Coiled-coil domain-containing protein 192 (292 aa).

Positions 28–55 are disordered; it reads SVVPESDTSERSSMTSGSSESDIPQENK. Positions 38 to 49 are enriched in low complexity; that stretch reads RSSMTSGSSESD. 2 coiled-coil regions span residues 65 to 174 and 222 to 258; these read QMAF…LATA and IMEL…AERS. The segment covering 251 to 267 has biased composition (basic and acidic residues); sequence QQLEAERSPHPPQEVKD. Positions 251–292 are disordered; the sequence is QQLEAERSPHPPQEVKDPPGCLPEAPVFSTHDIPPVVSDENL.

This chain is Coiled-coil domain-containing protein 192, found in Homo sapiens (Human).